Reading from the N-terminus, the 452-residue chain is Exodeoxyribonuclease 7 large subunit (452 aa).

Belongs to the XseA family. As to quaternary structure, heterooligomer composed of large and small subunits.

The protein resides in the cytoplasm. It carries out the reaction Exonucleolytic cleavage in either 5'- to 3'- or 3'- to 5'-direction to yield nucleoside 5'-phosphates.. Functionally, bidirectionally degrades single-stranded DNA into large acid-insoluble oligonucleotides, which are then degraded further into small acid-soluble oligonucleotides. The protein is Exodeoxyribonuclease 7 large subunit of Bordetella avium (strain 197N).